A 391-amino-acid polypeptide reads, in one-letter code: Esterase (391 aa).

A signal peptide spans 1–26 (MEFPETNNNPIITLSFLLCMLSLAYA). Ser-41 functions as the Nucleophile in the catalytic mechanism. Residues Asn-186, Asn-193, and Asn-313 are each glycosylated (N-linked (GlcNAc...) asparagine). Catalysis depends on residues Asp-347 and His-350.

The protein belongs to the 'GDSL' lipolytic enzyme family. Post-translationally, the N-terminus is blocked. Glycosylated.

In terms of biological role, has lipase and esterase activities. May be involved in plant defense. The sequence is that of Esterase from Hevea brasiliensis (Para rubber tree).